Reading from the N-terminus, the 219-residue chain is Ribose-5-phosphate isomerase A (219 aa).

Substrate-binding positions include 28–31 (TGST), 81–84 (DGAD), and 94–97 (KGGG). E103 acts as the Proton acceptor in catalysis. Residue K121 coordinates substrate.

It belongs to the ribose 5-phosphate isomerase family. Homodimer.

The enzyme catalyses aldehydo-D-ribose 5-phosphate = D-ribulose 5-phosphate. The protein operates within carbohydrate degradation; pentose phosphate pathway; D-ribose 5-phosphate from D-ribulose 5-phosphate (non-oxidative stage): step 1/1. Catalyzes the reversible conversion of ribose-5-phosphate to ribulose 5-phosphate. The sequence is that of Ribose-5-phosphate isomerase A from Photobacterium profundum (strain SS9).